The primary structure comprises 168 residues: Large ribosomal subunit protein uL10 (168 aa).

It belongs to the universal ribosomal protein uL10 family. Part of the ribosomal stalk of the 50S ribosomal subunit. The N-terminus interacts with L11 and the large rRNA to form the base of the stalk. The C-terminus forms an elongated spine to which L12 dimers bind in a sequential fashion forming a multimeric L10(L12)X complex.

In terms of biological role, forms part of the ribosomal stalk, playing a central role in the interaction of the ribosome with GTP-bound translation factors. The sequence is that of Large ribosomal subunit protein uL10 from Pediococcus pentosaceus (strain ATCC 25745 / CCUG 21536 / LMG 10740 / 183-1w).